The primary structure comprises 95 residues: Osteocalcin 1 (95 aa).

Residues 1-21 (MKTLSVLVLCSLAVLCLTSDA) form the signal peptide. Positions 22-50 (SFSSQPAVDTPAQEGLFVEQEQASSVVRQ) are excised as a propeptide. In terms of domain architecture, Gla spans 45–91 (SSVVRQAPKELSLSQLESLREVCELNLACEDMMDTSGIIAAYTTYYG). Ca(2+) is bound by residues glutamate 61, glutamate 65, and glutamate 68. Glutamate 61, glutamate 65, and glutamate 68 each carry 4-carboxyglutamate. An intrachain disulfide couples cysteine 67 to cysteine 73.

The protein belongs to the osteocalcin/matrix Gla protein family. In terms of processing, gamma-carboxyglutamate residues are formed by vitamin K dependent carboxylation by GGCX. These residues are essential for the binding of calcium.

The protein resides in the secreted. In terms of biological role, the carboxylated form is one of the main organic components of the bone matrix, which constitutes 1-2% of the total bone protein. The carboxylated form binds strongly to apatite and calcium. The sequence is that of Osteocalcin 1 from Solea senegalensis (Senegalese sole).